The following is a 408-amino-acid chain: Echinulin prenyltransferase 2 (408 aa).

The dimethylallyl diphosphate site is built by arginine 94, lysine 181, tyrosine 183, arginine 248, lysine 250, tyrosine 252, glutamine 334, tyrosine 336, tyrosine 400, and tyrosine 404.

It belongs to the tryptophan dimethylallyltransferase family.

The catalysed reaction is preechinulin + dimethylallyl diphosphate = tardioxopiperazine B + diphosphate. It carries out the reaction preechinulin + dimethylallyl diphosphate = tardioxopiperazine A + diphosphate. It catalyses the reaction tardioxopiperazine A + dimethylallyl diphosphate = echinulin + diphosphate. The enzyme catalyses tardioxopiperazine A + dimethylallyl diphosphate = variecolorin L + diphosphate. The catalysed reaction is neoechinulin A + dimethylallyl diphosphate = variecolorin G + diphosphate. It carries out the reaction neoechinulin A + dimethylallyl diphosphate = isoechinulin A + diphosphate. It catalyses the reaction isoechinulin A + dimethylallyl diphosphate = dehydroechinulin + diphosphate. The enzyme catalyses neoechinulin B + dimethylallyl diphosphate = isoechinulin B + diphosphate. It participates in secondary metabolite biosynthesis. Its pathway is alkaloid biosynthesis. Functionally, prenyltransferase; part of the gene cluster that mediates the biosynthesis of echinulin family alkaloid. The pathway begins with the biosynthesis of the cyclic dipeptide cyclo-L-Trp-L-Ala (cyclo-TA) by the NRPS echPS via condensation of L-alanine and L-tryptophan. The prenyltransferase echPT1 then catalyzes the first prenylation step, a reverse prenylation reaction at C2, to yield preechinulin. Preechinulin is the substrate of the cytochrome P450 monooxygenase echP450 that catalyzes the formation of the double bond between C10 and C11 to produce neoechulin A. The unique prenyltransferase echPT2 functions as a competitive enzyme with echP450 for preechinulin metabolization and uses preechinulin for effective regiospecific prenylations. Preechinulin is prenylated by echPT2 at C5 or C7. C7-prenylation leads to accumulation of tardioxopiperazine B without further modification by echPT2. In contrast, the C5-prenylated tardioxopiperazine A can be prenylated again by echPT2, predominantly at C7 to form echinulin or less frequently at C4 to give variecolorin L. EchPT2 also accepts neoechilunin A to produce varlecolorin G (prenylation at C5) or isoechinulin A (prenylation at C7). EchPT2 further converts isoechinulin A into dehydroechinulin. Moreover, a yet unidentified enzyme can also convert neoechilunin A into neoechilunin B by introducing a double bond between positions C14 and C17 and thus provides a further substrate to echPT2 for C5 and C7 prenylation. The protein is Echinulin prenyltransferase 2 of Aspergillus ruber (Eurotium rubrum).